The sequence spans 354 residues: Ornithine carbamoyltransferase, catabolic (354 aa).

Residues 67–70, Q94, R118, and 145–148 each bind carbamoyl phosphate; these read STRT and HPTQ. L-ornithine is bound by residues N177, D241, and 245 to 246; that span reads SM. Residues 284–285 and R329 each bind carbamoyl phosphate; that span reads CL.

It belongs to the aspartate/ornithine carbamoyltransferase superfamily. OTCase family.

It is found in the cytoplasm. It carries out the reaction carbamoyl phosphate + L-ornithine = L-citrulline + phosphate + H(+). It participates in amino-acid degradation; L-arginine degradation via ADI pathway; carbamoyl phosphate from L-arginine: step 2/2. Its function is as follows. Reversibly catalyzes the transfer of the carbamoyl group from carbamoyl phosphate (CP) to the N(epsilon) atom of ornithine (ORN) to produce L-citrulline. This chain is Ornithine carbamoyltransferase, catabolic (arcB), found in Lactococcus lactis subsp. cremoris (strain MG1363).